The following is a 781-amino-acid chain: Molybdenum cofactor sulfurase (781 aa).

N6-(pyridoxal phosphate)lysine is present on Lys246. Cys413 is an active-site residue. The 147-residue stretch at 635–781 (LRLLRQSGQR…MTCGDVVLVE (147 aa)) folds into the MOSC domain. Residue Ser734 is modified to Phosphoserine.

Belongs to the class-V pyridoxal-phosphate-dependent aminotransferase family. MOCOS subfamily. It depends on pyridoxal 5'-phosphate as a cofactor.

The enzyme catalyses Mo-molybdopterin + L-cysteine + AH2 = thio-Mo-molybdopterin + L-alanine + A + H2O. It functions in the pathway cofactor biosynthesis; molybdopterin biosynthesis. In terms of biological role, sulfurates the molybdenum cofactor. Sulfation of molybdenum is essential for xanthine dehydrogenase (XDH) and aldehyde oxidase (ADO) enzymes in which molybdenum cofactor is liganded by 1 oxygen and 1 sulfur atom in active form. This Drosophila melanogaster (Fruit fly) protein is Molybdenum cofactor sulfurase.